Reading from the N-terminus, the 385-residue chain is Multicilin (385 aa).

A necessary and sufficient for its degradation during the cell cycle region spans residues 1-130 (MQACGGGAAG…TVDDLISDSS (130 aa)). Residues 86–111 (SSLLGSDAPPGGDLAASQNHSHQTEA) are disordered. The tract at residues 131–385 (SMMSPTLASG…GGYKFRWVPS (255 aa)) is necessary and sufficient for proper nuclear localization. The tract at residues 173-245 (PDVPPPEQYW…SVLDKLMITQ (73 aa)) is necessary and sufficient for interaction with GMNN and sufficient for homodimerization. Positions 179 to 227 (EQYWKEVADQNQRALGDALVENNQLHVTLTQKQEEIASLKERNVQLKEL) form a coiled coil. Positions 294–319 (ALQSRDPKRPRLLPEPANTDTRPGNL) are disordered.

The protein belongs to the geminin family. Heterodimer (via coiled-coil domain) with GMNN (via coiled-coil domain); targets GMNN to the nucleus. Can form homodimers (in vitro, via coiled-coil domain), but these are much less stable than the heterodimer formed with GMNN.

It localises to the nucleus. Transcription regulator specifically required for multiciliate cell differentiation. Acts in a multiprotein complex containing E2F4 and E2F5 that binds and activates genes required for centriole biogenesis. Required for the deuterosome-mediated acentriolar pathway. Plays a role in mitotic cell cycle progression by promoting cell cycle exit. Modulates GMNN activity by reducing its affinity for CDT1. This Homo sapiens (Human) protein is Multicilin.